Here is a 192-residue protein sequence, read N- to C-terminus: CASP-like protein 2U1 (192 aa).

Residues 1–11 lie on the Cytoplasmic side of the membrane; the sequence is MASRKQGAREG. Residues 12-32 traverse the membrane as a helical segment; sequence LWSMGVRLLTTLLCITSLILL. Residues 33-58 lie on the Extracellular side of the membrane; the sequence is LKAKQTVRRALGLGYIAQTVKYSDTS. Residues 59–79 form a helical membrane-spanning segment; the sequence is GFIYLVYINILVAAYGLIVFV. At 80 to 96 the chain is on the cytoplasmic side; it reads SLIPSALGKSCSGKCSR. The chain crosses the membrane as a helical span at residues 97–117; it reads WTIFVLDQVFAYVLLSAVSAA. Topologically, residues 118–145 are extracellular; it reads TEVLYLADKGMSKTQWEALCPTYGFFCH. A helical transmembrane segment spans residues 146–166; sequence MVSASVAIGSVAVVLLAVLSV. The Cytoplasmic portion of the chain corresponds to 167–192; that stretch reads SSAQSLFHNFYTRALYTTKMRHSSLT.

This sequence belongs to the Casparian strip membrane proteins (CASP) family. As to quaternary structure, homodimer and heterodimers.

It localises to the cell membrane. In Adiantum capillus-veneris (Maidenhair fern), this protein is CASP-like protein 2U1.